Here is a 271-residue protein sequence, read N- to C-terminus: Formamidopyrimidine-DNA glycosylase (271 aa).

Proline 2 serves as the catalytic Schiff-base intermediate with DNA. Glutamate 3 functions as the Proton donor in the catalytic mechanism. Residue lysine 58 is the Proton donor; for beta-elimination activity of the active site. DNA contacts are provided by histidine 91, arginine 110, and arginine 152. An FPG-type zinc finger spans residues 237–271; the sequence is SIYGKKGRPCPKCGSAIRMMRLGGRSTFFCPLCQK. The active-site Proton donor; for delta-elimination activity is arginine 261.

Belongs to the FPG family. As to quaternary structure, monomer. The cofactor is Zn(2+).

It catalyses the reaction Hydrolysis of DNA containing ring-opened 7-methylguanine residues, releasing 2,6-diamino-4-hydroxy-5-(N-methyl)formamidopyrimidine.. It carries out the reaction 2'-deoxyribonucleotide-(2'-deoxyribose 5'-phosphate)-2'-deoxyribonucleotide-DNA = a 3'-end 2'-deoxyribonucleotide-(2,3-dehydro-2,3-deoxyribose 5'-phosphate)-DNA + a 5'-end 5'-phospho-2'-deoxyribonucleoside-DNA + H(+). In terms of biological role, involved in base excision repair of DNA damaged by oxidation or by mutagenic agents. Acts as a DNA glycosylase that recognizes and removes damaged bases. Has a preference for oxidized purines, such as 7,8-dihydro-8-oxoguanine (8-oxoG). Has AP (apurinic/apyrimidinic) lyase activity and introduces nicks in the DNA strand. Cleaves the DNA backbone by beta-delta elimination to generate a single-strand break at the site of the removed base with both 3'- and 5'-phosphates. The protein is Formamidopyrimidine-DNA glycosylase of Geotalea daltonii (strain DSM 22248 / JCM 15807 / FRC-32) (Geobacter daltonii).